The following is a 109-amino-acid chain: Class I hydrophobin SC1 (109 aa).

The first 22 residues, 1–22, serve as a signal peptide directing secretion; the sequence is MRFSLAILALPVLAAATAVPRG. Disulfide bonds link Cys27/Cys88, Cys34/Cys82, Cys35/Cys69, and Cys89/Cys102.

It belongs to the fungal hydrophobin family. As to quaternary structure, self-assembles to form functional amyloid fibrils called rodlets. Self-assembly into fibrillar rodlets occurs spontaneously at hydrophobic:hydrophilic interfaces and the rodlets further associate laterally to form amphipathic monolayers.

The protein localises to the secreted. It is found in the cell wall. In terms of biological role, aerial growth, conidiation, and dispersal of filamentous fungi in the environment rely upon a capability of their secreting small amphipathic proteins called hydrophobins (HPBs) with low sequence identity. Class I can self-assemble into an outermost layer of rodlet bundles on aerial cell surfaces, conferring cellular hydrophobicity that supports fungal growth, development and dispersal; whereas Class II form highly ordered films at water-air interfaces through intermolecular interactions but contribute nothing to the rodlet structure. SC1 is a dikaryon-specific class I hydrophobin that contributes to the formation of aerial hyphae and fruiting bodies. The chain is Class I hydrophobin SC1 from Schizophyllum commune (Split gill fungus).